A 615-amino-acid chain; its full sequence is Zinc finger protein 653 (615 aa).

Disordered regions lie at residues 1-46 (MAER…ARRR), 93-115 (RSGR…KRRR), and 174-235 (PLSD…SGLI). The span at 7–25 (EPGAEAEAGAGGEAAAEEG) shows a compositional bias: low complexity. Residues 106-115 (KKPKRKKRRR) are compositionally biased toward basic residues. 2 stretches are compositionally biased toward low complexity: residues 192–203 (GSSDSSSSGSSS) and 212–232 (QPAK…TGSS). 5 consecutive C2H2-type zinc fingers follow at residues 467–492 (FHCP…NLVH), 498–522 (KVCP…MIIH), 528–550 (FTCE…RRTH), 556–578 (LQCE…MKKH), and 586–609 (FTCD…LKSH).

This sequence belongs to the krueppel C2H2-type zinc-finger protein family. Interacts with NR5A1. As to expression, highly expressed in testis and spleen. Moderately expressed in lung, adrenal gland, uterus, and ovary. Very low expression in pancreas, heart, skeletal muscle, adipose tissue, kidney, and liver.

Its subcellular location is the nucleus. Transcriptional repressor. May repress NR5A1, PPARG, NR1H3, NR4A2, ESR1 and NR3C1 transcriptional activity. This chain is Zinc finger protein 653 (Znf653), found in Mus musculus (Mouse).